The following is a 241-amino-acid chain: Small ribosomal subunit protein uS2 (241 aa).

This sequence belongs to the universal ribosomal protein uS2 family.

In Yersinia pestis bv. Antiqua (strain Antiqua), this protein is Small ribosomal subunit protein uS2.